Consider the following 649-residue polypeptide: MFSIFKRRSVQAALAASGLVGGAVFYSDFIKRPAPSHFNPQFTPFTKSLAPPPSRETLLKNVEDISKFDVLIIGGGATGTGVAVDASTRGLNVCLLEKTDFASETSSKSTKMAHGGVRYLEKAVFQLSKAQLDLVIEALNERANMLRTAPHLCTVLPIMIPVYKWWQVPYFFVGCKIYDWVAGSKNLRASTIFSKETTVAIAPMLDDSNLKASCVYHDGSFNDTRMNTTLAVTAIDNGATVLNYMEVKKLLKSKDNKLEGVLAIDRETGKEYQIKATSVVNATGPFSDKILEMDADPQGEPPKTAQFPRMVVPSAGVHVVLPEYYCPPNIGILDPSTSDNRVMFFLPWQGKVIAGTTDKPLSSVPTNPTPSEDDIQLILKELQKYLVFPVDREDVLSAWCGIRPLVRDPSTVPPGTDPTTGETQGLVRSHFIFKSDTGLLTISGGKWTTYREMAEETVNELIKDHDFGKALKPCQTKKLILVGGENYYKNYSARLIHEYHIPLRLAKHLSHNYGSRAPLILELYSKTDFNKLPVTLADKEVFAPSSDASSDKSVSYASFDEPFTVAELKYSIKYEYTRTPTDFLARRTRLAFLDARQALQAVAGVTHVMKEEFGWDDATTDKLAQEARDYIGGMGVSSDRFDVKQFEVK.

69-97 (DVLIIGGGATGTGVAVDASTRGLNVCLLE) contributes to the FAD binding site.

It belongs to the FAD-dependent glycerol-3-phosphate dehydrogenase family. The cofactor is FAD.

It is found in the mitochondrion. The catalysed reaction is a quinone + sn-glycerol 3-phosphate = dihydroxyacetone phosphate + a quinol. Its pathway is polyol metabolism; glycerol degradation via glycerol kinase pathway; glycerone phosphate from sn-glycerol 3-phosphate (anaerobic route): step 1/1. The polypeptide is Glycerol-3-phosphate dehydrogenase, mitochondrial (gut2) (Schizosaccharomyces pombe (strain 972 / ATCC 24843) (Fission yeast)).